Reading from the N-terminus, the 486-residue chain is tRNA sulfurtransferase (486 aa).

The region spanning 63 to 167 (DAFAERLGCI…HEKLYMVVRR (105 aa)) is the THUMP domain. Residues 185-186 (LI), Lys267, Gly289, and Gln298 each bind ATP. A disulfide bridge links Cys346 with Cys460. One can recognise a Rhodanese domain in the interval 408–486 (VDTQEVVIDI…GYTNVKVYRP (79 aa)). Residue Cys460 is the Cysteine persulfide intermediate of the active site.

The protein belongs to the ThiI family.

The protein resides in the cytoplasm. The catalysed reaction is [ThiI sulfur-carrier protein]-S-sulfanyl-L-cysteine + a uridine in tRNA + 2 reduced [2Fe-2S]-[ferredoxin] + ATP + H(+) = [ThiI sulfur-carrier protein]-L-cysteine + a 4-thiouridine in tRNA + 2 oxidized [2Fe-2S]-[ferredoxin] + AMP + diphosphate. The enzyme catalyses [ThiS sulfur-carrier protein]-C-terminal Gly-Gly-AMP + S-sulfanyl-L-cysteinyl-[cysteine desulfurase] + AH2 = [ThiS sulfur-carrier protein]-C-terminal-Gly-aminoethanethioate + L-cysteinyl-[cysteine desulfurase] + A + AMP + 2 H(+). Its pathway is cofactor biosynthesis; thiamine diphosphate biosynthesis. Functionally, catalyzes the ATP-dependent transfer of a sulfur to tRNA to produce 4-thiouridine in position 8 of tRNAs, which functions as a near-UV photosensor. Also catalyzes the transfer of sulfur to the sulfur carrier protein ThiS, forming ThiS-thiocarboxylate. This is a step in the synthesis of thiazole, in the thiamine biosynthesis pathway. The sulfur is donated as persulfide by IscS. In Shewanella denitrificans (strain OS217 / ATCC BAA-1090 / DSM 15013), this protein is tRNA sulfurtransferase.